We begin with the raw amino-acid sequence, 114 residues long: Gas vesicle protein J (114 aa).

Positions Pro-63–Glu-114 are disordered. Positions Asp-80 to Ser-91 are enriched in basic and acidic residues. The segment covering Ser-104–Glu-114 has biased composition (polar residues).

The protein belongs to the gas vesicle GvpA family. In terms of assembly, gvpF to GvpM interact with each other in vitro, and may form multi-subunit complex(es). Interacts with GvpA.

It is found in the gas vesicle. A minor component of the gas vesicle, proteins GvpF to GvpM might be involved in nucleating gas vesicle formation. Gas vesicles are hollow, gas filled proteinaceous nanostructures found in some microorganisms. They allow positioning of halobacteria at the optimal depth for growth in the poorly aerated, shallow brine pools of their habitat. Its function is as follows. Expression of a 9.5 kb mc-vac DNA fragment containing 2 divergently transcribed regions (gvpD-gvpE-gvpF-gvpG-gvpH-gvpI-gvpJ-gvpK-gvpL-gvpM and gvpA-gvpC-gvpN-gvpO) allows H.volcanii to produce gas vesicles. The polypeptide is Gas vesicle protein J (Haloferax mediterranei (strain ATCC 33500 / DSM 1411 / JCM 8866 / NBRC 14739 / NCIMB 2177 / R-4) (Halobacterium mediterranei)).